Reading from the N-terminus, the 453-residue chain is Fibrinogen gamma chain (453 aa).

An N-terminal signal peptide occupies residues Met-1–Ala-26. Phosphoserine; by FAM20C is present on Ser-68. Asn-78 is a glycosylation site (N-linked (GlcNAc...) (complex) asparagine). Residues Gln-170 to Asn-416 form the Fibrinogen C-terminal domain. A disulfide bridge links Cys-179 with Cys-208. Asn-334 carries N-linked (GlcNAc...) asparagine; in variant Asahi glycosylation. Ca(2+) is bound by residues Asp-344, Asp-346, Phe-348, and Gly-350. A disulfide bridge connects residues Cys-352 and Cys-365. The gamma-chain polymerization, binding amino end of another fibrin alpha chain stretch occupies residues Thr-400–Glu-422. The interval Gly-423–Glu-437 is platelet aggregation and Staphylococcus clumping. Residue Gln-424 forms an Isoglutamyl lysine isopeptide (Gln-Lys) (interchain with K-432) linkage. Residues Gln-424–Leu-453 form a disordered region. Lys-432 is covalently cross-linked (Isoglutamyl lysine isopeptide (Lys-Gln) (interchain with Q-424)). Residues Thr-442–Leu-453 show a composition bias toward acidic residues. A sulfotyrosine mark is found at Tyr-444 and Tyr-448.

Heterohexamer; disulfide linked. Contains 2 sets of 3 non-identical chains (alpha, beta and gamma). The 2 heterotrimers are in head to head conformation with the N-termini in a small central domain. In terms of processing, conversion of fibrinogen to fibrin is triggered by thrombin, which cleaves fibrinopeptides A and B from alpha and beta chains, and thus exposes the N-terminal polymerization sites responsible for the formation of the soft clot. The soft clot is converted into the hard clot by factor XIIIA which catalyzes the epsilon-(gamma-glutamyl)lysine cross-linking between gamma chains (stronger) and between alpha chains (weaker) of different monomers. Sulfation of C-terminal tyrosines increases affinity for thrombin. Detected in blood plasma (at protein level).

The protein localises to the secreted. Together with fibrinogen alpha (FGA) and fibrinogen beta (FGB), polymerizes to form an insoluble fibrin matrix. Has a major function in hemostasis as one of the primary components of blood clots. In addition, functions during the early stages of wound repair to stabilize the lesion and guide cell migration during re-epithelialization. Was originally thought to be essential for platelet aggregation, based on in vitro studies using anticoagulated blood. However, subsequent studies have shown that it is not absolutely required for thrombus formation in vivo. Enhances expression of SELP in activated platelets via an ITGB3-dependent pathway. Maternal fibrinogen is essential for successful pregnancy. Fibrin deposition is also associated with infection, where it protects against IFNG-mediated hemorrhage. May also facilitate the antibacterial immune response via both innate and T-cell mediated pathways. The chain is Fibrinogen gamma chain (FGG) from Homo sapiens (Human).